A 497-amino-acid chain; its full sequence is MGGFVLAIDQGTTSSRAIVFDGAMRIVGTGQKEFPQIFPQSGWVEHDPDAIWDSVVSSIHDALARARITAGDLAAIGITNQRETVVVWDKDTGKPIHNAIVWQDRRTSAFCETLKRDGLEATVTTKTGLLLDPYFSGTKLSWLLDHVEGARARAEQGGLCFGTVDTYLIWRLTGGKSFVTDATNASRTLIFNIAEHGWDEELLALLNIPAAMLPEVKDCAADFGVTDKAVFGAAVPILGVAGDQQAATIGQACFAPGMVKSTYGTGCFALLNTGADRVVSKSRLLTTIAYRMDGKTTYALEGSIFIAGAAVQWLRDGLKVIGDAAETGRLAAEADPGQPVYLVPAFTGLGAPWWDPDARGALFGLTRNTGPAELARAALEAVCYQTRDLLDAMHKDWQNGEDDMVLRVDGGMAASDWTMQRLADLLDAPVDRPSVIETTALGAAFLAASRVGLWPGMDAFARAWARDHRFEPVMDAETRTEKLRGWRDAVRRTLTAG.

Residue Thr12 coordinates ADP. ATP is bound by residues Thr12, Thr13, and Ser14. Thr12 contributes to the sn-glycerol 3-phosphate binding site. Residue Arg16 participates in ADP binding. 4 residues coordinate sn-glycerol 3-phosphate: Arg82, Glu83, Tyr134, and Asp243. Residues Arg82, Glu83, Tyr134, Asp243, and Gln244 each coordinate glycerol. ADP contacts are provided by Thr265 and Gly308. Residues Thr265, Gly308, Gln312, and Gly411 each coordinate ATP. Gly411 serves as a coordination point for ADP.

Belongs to the FGGY kinase family.

The catalysed reaction is glycerol + ATP = sn-glycerol 3-phosphate + ADP + H(+). It functions in the pathway polyol metabolism; glycerol degradation via glycerol kinase pathway; sn-glycerol 3-phosphate from glycerol: step 1/1. Inhibited by fructose 1,6-bisphosphate (FBP). Its function is as follows. Key enzyme in the regulation of glycerol uptake and metabolism. Catalyzes the phosphorylation of glycerol to yield sn-glycerol 3-phosphate. This is Glycerol kinase from Allorhizobium ampelinum (strain ATCC BAA-846 / DSM 112012 / S4) (Agrobacterium vitis (strain S4)).